A 212-amino-acid polypeptide reads, in one-letter code: Pyridoxine/pyridoxamine 5'-phosphate oxidase (212 aa).

Residues 8 to 11 and Lys66 contribute to the substrate site; that span reads RTDY. FMN contacts are provided by residues 61-66, 76-77, Lys83, and Gln105; these read RIVLLK and FT. The substrate site is built by Tyr123, Arg127, and Ser131. FMN contacts are provided by residues 140–141 and Trp184; that span reads QS. Residue 190–192 participates in substrate binding; the sequence is RLH. FMN is bound at residue Arg194.

This sequence belongs to the pyridoxamine 5'-phosphate oxidase family. In terms of assembly, homodimer. FMN serves as cofactor.

It carries out the reaction pyridoxamine 5'-phosphate + O2 + H2O = pyridoxal 5'-phosphate + H2O2 + NH4(+). The catalysed reaction is pyridoxine 5'-phosphate + O2 = pyridoxal 5'-phosphate + H2O2. The protein operates within cofactor metabolism; pyridoxal 5'-phosphate salvage; pyridoxal 5'-phosphate from pyridoxamine 5'-phosphate: step 1/1. It participates in cofactor metabolism; pyridoxal 5'-phosphate salvage; pyridoxal 5'-phosphate from pyridoxine 5'-phosphate: step 1/1. Its function is as follows. Catalyzes the oxidation of either pyridoxine 5'-phosphate (PNP) or pyridoxamine 5'-phosphate (PMP) into pyridoxal 5'-phosphate (PLP). This chain is Pyridoxine/pyridoxamine 5'-phosphate oxidase, found in Ralstonia pickettii (strain 12J).